A 177-amino-acid chain; its full sequence is Immunity protein CdiI-YPIII (177 aa).

As to quaternary structure, interacts with the C-terminal DNase fragment (residues 954-1077) of cognate toxin CdiA-YPIII.

Immunity protein component of a toxin-immunity protein module, which functions as a cellular contact-dependent growth inhibition (CDI) system. CDI modules allow bacteria to communicate with and inhibit the growth of closely related neighboring bacteria in a contact-dependent fashion. Neutralizes the toxic activity of cognate toxin CdiA-YPIII (residues 954-1077). Does not inhibit toxic activity of CdiA from other toxin-immunity modules. The sequence is that of Immunity protein CdiI-YPIII from Yersinia pseudotuberculosis serotype O:3 (strain YPIII).